A 530-amino-acid polypeptide reads, in one-letter code: MEPRTVAEAVETGKEDVIMEALRSYNQEHSQSFTFDDAQQEDRKRLAELLVSVLEQGLPPSHRVTWLQSVRILSRDHNCLDPFTSRQSLQALACYADISVSEGSVPESPDMDVVLESLKCLCNLVLSSPVAQMLAAEARLVVKLTERVGLYRERSFPHDVQFFDLRLLFLLTALRTDVRQQLFQELKGVRLLTDTLELTLGVTPEGNPPKLLPSQETERAMEILKVLFNITLDSIKGEVDEEDAALYRHLGTLLRHCVMIATAGDRTEEFHGHAVNLLGNLPLKCLDVLFTLEPHGDSVEFMGVNMDVIRALLIFLEKRLHQTHRLKESVAPVLSVLTECARMHRPARKFLKAQVLPPLRDVRTRPEVGEMLRNKLVRLMTHLDTDVKRVAAEFLFVLCSESVPRFIKYTGYGNAAGLLAARGLMAGGRPEGQYSEDEDTDTDEYKEAKASINPVTGRVEEKPPNPMEGMTEEQKEHEAMKLVTMFDKLSRNRVIQPMGMSPRGHLTSLQDAMCETMEQQLSSDPDSDPD.

Residue Ser-435 is modified to Phosphoserine. Phosphothreonine is present on residues Thr-440 and Thr-442. Phosphoserine occurs at positions 501, 522, 523, and 527.

It belongs to the synembryn family. In terms of assembly, interacts with GDP-bound G alpha proteins GNAI1, GNAO1 and GNAQ, and with GNA13 with lower affinity. Does not interact with G-alpha proteins when they are in complex with subunits beta and gamma. Interacts (via C-terminus) with RGS14; the interaction stimulates the dissociation of the complex between RGS14 and the active GTP-bound form of GNAI1. Interacts with NCS1; interaction is favored in the absence of Ca(2+) and myristoylation of NCS1 is not required. In terms of processing, phosphorylated at Ser-435 and Thr-440 by CK2, stabilizing its interface with G alpha proteins.

The protein localises to the cytoplasm. It is found in the cell cortex. In terms of biological role, chaperone that specifically binds and folds nascent G alpha proteins prior to G protein heterotrimer formation, promoting their stability and activity: folds GNAI1, GNAO1, GNA13 and GNAQ. Does not fold G(s) G-alpha proteins GNAS nor GNAL. Also acts as a guanine nucleotide exchange factor (GEF) for G alpha proteins by stimulating exchange of bound GDP for free GTP. Involved in regulation of microtubule pulling forces during mitotic movement of chromosomes by stimulating G(i)-alpha protein (GNAI1), possibly leading to release G(i)-alpha-GTP and NuMA proteins from the NuMA-GPSM2-G(i)-alpha-GDP complex. Also acts as an activator for G(q)-alpha (GNAQ) protein by enhancing the G(q)-coupled receptor-mediated ERK activation. This is Chaperone Ric-8A (RIC8A) from Pongo abelii (Sumatran orangutan).